Here is an 89-residue protein sequence, read N- to C-terminus: Co-chaperonin GroES (89 aa).

This sequence belongs to the GroES chaperonin family. Heptamer of 7 subunits arranged in a ring. Interacts with the chaperonin GroEL.

The protein resides in the cytoplasm. Functionally, together with the chaperonin GroEL, plays an essential role in assisting protein folding. The GroEL-GroES system forms a nano-cage that allows encapsulation of the non-native substrate proteins and provides a physical environment optimized to promote and accelerate protein folding. GroES binds to the apical surface of the GroEL ring, thereby capping the opening of the GroEL channel. This chain is Co-chaperonin GroES, found in Pseudothermotoga lettingae (strain ATCC BAA-301 / DSM 14385 / NBRC 107922 / TMO) (Thermotoga lettingae).